The chain runs to 189 residues: Segregation and condensation protein B (189 aa).

It belongs to the ScpB family. As to quaternary structure, homodimer. Homodimerization may be required to stabilize the binding of ScpA to the Smc head domains. Component of a cohesin-like complex composed of ScpA, ScpB and the Smc homodimer, in which ScpA and ScpB bind to the head domain of Smc. The presence of the three proteins is required for the association of the complex with DNA.

Its subcellular location is the cytoplasm. Participates in chromosomal partition during cell division. May act via the formation of a condensin-like complex containing Smc and ScpA that pull DNA away from mid-cell into both cell halves. The polypeptide is Segregation and condensation protein B (Streptococcus mitis).